The following is a 91-amino-acid chain: DNA-binding protein HU (91 aa).

This sequence belongs to the bacterial histone-like protein family.

Histone-like DNA-binding protein which is capable of wrapping DNA to stabilize it, and thus to prevent its denaturation under extreme environmental conditions. Also seems to act as a fortuitous virulence factor in delayed sequelae by binding to heparan sulfate-proteoglycans in the extracellular matrix of target organs and acting as a nidus for in situ immune complex formation. The protein is DNA-binding protein HU (hup) of Streptococcus mutans serotype c (strain ATCC 700610 / UA159).